A 295-amino-acid polypeptide reads, in one-letter code: Vesicle-associated protein 4-2 (295 aa).

The segment covering 1 to 10 (MTMTEEKPTS) has biased composition (basic and acidic residues). Residues 1 to 99 (MTMTEEKPTS…PSPSVSSVAK (99 aa)) form a disordered region. Residues 31–53 (NAASSAATSPFPSGASSSSTSSH) are compositionally biased toward low complexity. The span at 54–71 (LHNHHQHHHQHHHQHHHQ) shows a compositional bias: basic residues. The segment covering 83–98 (GQNQHPTPSPSVSSVA) has biased composition (polar residues). In terms of domain architecture, MSP spans 107 to 229 (RLKLDPSEKL…KEQILRVIFL (123 aa)). The span at 249-263 (DAAVEARKKPPEETG) shows a compositional bias: basic and acidic residues. The interval 249–270 (DAAVEARKKPPEETGPKMIGEG) is disordered. S294 carries the phosphoserine modification.

Belongs to the VAMP-associated protein (VAP) (TC 9.B.17) family.

May play a role in vesicle trafficking. In Arabidopsis thaliana (Mouse-ear cress), this protein is Vesicle-associated protein 4-2 (PVA42).